The sequence spans 456 residues: Bifunctional protein GlmU (456 aa).

The segment at 1–229 is pyrophosphorylase; it reads MSSHAMSVVI…LSEVEGVNNR (229 aa). UDP-N-acetyl-alpha-D-glucosamine is bound by residues 11 to 14, Lys-25, Gln-76, 81 to 82, 103 to 105, Gly-140, Glu-154, Asn-169, and Asn-227; these read LAAG, GT, and YGD. Asp-105 serves as a coordination point for Mg(2+). Mg(2+) is bound at residue Asn-227. A linker region spans residues 230 to 250; that stretch reads LQLARLEHVYQAEQAEKLLLA. Residues 251-456 form an N-acetyltransferase region; the sequence is GVMLRDPARF…QGWRRPVKKK (206 aa). UDP-N-acetyl-alpha-D-glucosamine contacts are provided by Arg-333 and Lys-351. His-363 functions as the Proton acceptor in the catalytic mechanism. Residues Tyr-366 and Asn-377 each contribute to the UDP-N-acetyl-alpha-D-glucosamine site. Acetyl-CoA-binding positions include Ala-380, 386-387, Ser-405, Ala-423, and Arg-440; that span reads NY.

This sequence in the N-terminal section; belongs to the N-acetylglucosamine-1-phosphate uridyltransferase family. The protein in the C-terminal section; belongs to the transferase hexapeptide repeat family. In terms of assembly, homotrimer. Mg(2+) is required as a cofactor.

It is found in the cytoplasm. It catalyses the reaction alpha-D-glucosamine 1-phosphate + acetyl-CoA = N-acetyl-alpha-D-glucosamine 1-phosphate + CoA + H(+). It carries out the reaction N-acetyl-alpha-D-glucosamine 1-phosphate + UTP + H(+) = UDP-N-acetyl-alpha-D-glucosamine + diphosphate. It functions in the pathway nucleotide-sugar biosynthesis; UDP-N-acetyl-alpha-D-glucosamine biosynthesis; N-acetyl-alpha-D-glucosamine 1-phosphate from alpha-D-glucosamine 6-phosphate (route II): step 2/2. Its pathway is nucleotide-sugar biosynthesis; UDP-N-acetyl-alpha-D-glucosamine biosynthesis; UDP-N-acetyl-alpha-D-glucosamine from N-acetyl-alpha-D-glucosamine 1-phosphate: step 1/1. The protein operates within bacterial outer membrane biogenesis; LPS lipid A biosynthesis. Its function is as follows. Catalyzes the last two sequential reactions in the de novo biosynthetic pathway for UDP-N-acetylglucosamine (UDP-GlcNAc). The C-terminal domain catalyzes the transfer of acetyl group from acetyl coenzyme A to glucosamine-1-phosphate (GlcN-1-P) to produce N-acetylglucosamine-1-phosphate (GlcNAc-1-P), which is converted into UDP-GlcNAc by the transfer of uridine 5-monophosphate (from uridine 5-triphosphate), a reaction catalyzed by the N-terminal domain. In Cronobacter sakazakii (strain ATCC BAA-894) (Enterobacter sakazakii), this protein is Bifunctional protein GlmU.